A 70-amino-acid polypeptide reads, in one-letter code: DNA-directed RNA polymerases I, II, and III subunit rpabc5 (70 aa).

Positions 7, 10, 44, and 45 each coordinate Zn(2+).

It belongs to the archaeal Rpo10/eukaryotic RPB10 RNA polymerase subunit family. In terms of assembly, component of the RNA polymerase I (Pol I), RNA polymerase II (Pol II) and RNA polymerase III (Pol III) complexes.

The protein localises to the nucleus. DNA-dependent RNA polymerase catalyzes the transcription of DNA into RNA using the four ribonucleoside triphosphates as substrates. Common component of RNA polymerases I, II and III which synthesize ribosomal RNA precursors, mRNA precursors and many functional non-coding RNAs, and a small RNAs, such as 5S rRNA and tRNAs, respectively. Pol II is the central component of the basal RNA polymerase II transcription machinery. Pols are composed of mobile elements that move relative to each other. In Pol II, RBP10 is part of the core element with the central large cleft. This Dictyostelium discoideum (Social amoeba) protein is DNA-directed RNA polymerases I, II, and III subunit rpabc5 (polr2l).